An 864-amino-acid chain; its full sequence is Microtubule-associated protein TORTIFOLIA1 (864 aa).

A disordered region spans residues 1 to 26 (MSTPTTSGSAAKPTRPARSSSLATRS). Over residues 17 to 26 (ARSSSLATRS) the composition is skewed to polar residues. HEAT repeat units lie at residues 76 to 113 (ETLP…LHCD), 117 to 154 (AHLT…IYLK), 167 to 204 (LAVG…SAAS), 208 to 245 (TSFQ…VGAI), and 248 to 285 (QSLE…HSSG). The tract at residues 329–353 (DGASDDSKLSASEQLGSEKNGEKRS) is disordered. At serine 414 the chain carries Phosphoserine. The disordered stretch occupies residues 426–504 (NDEEESGLDD…QSEGSFTSNR (79 aa)). The segment covering 439 to 448 (MGSSNRLKNT) has biased composition (polar residues). Basic and acidic residues predominate over residues 449–459 (QADDKQVKGRF). A compositionally biased stretch (polar residues) spans 489-504 (VSNTDNQSEGSFTSNR). A coiled-coil region spans residues 508 to 561 (SAIQRQLLQLERQQTNLMNMLQEFIGGSHDSMVTLEGRVRGLERIVEDMARDLS). The interval 615–670 (DDWFIPPHAASRNGQAGPRRSPRSEQYENEHMGNGRRGWDNKASGTIRFGEGPSAR) is disordered. Basic and acidic residues predominate over residues 636 to 654 (PRSEQYENEHMGNGRRGWD).

As to quaternary structure, interacts with WAV3. In terms of tissue distribution, expressed in roots, hypocotyls, stems, flowers, siliques, inflorescences, petioles, cotyledons, and leaves. Particularly present in root tips and shoot meristems.

The protein resides in the cytoplasm. It localises to the cytoskeleton. Its function is as follows. Plant-specific microtubule-associated protein (MAP) that regulates the orientation of cortical microtubules and the direction of organ growth. Determines microtubule organization by modulating microtubule severing. In Arabidopsis thaliana (Mouse-ear cress), this protein is Microtubule-associated protein TORTIFOLIA1.